We begin with the raw amino-acid sequence, 496 residues long: MSYPQFGYPYSSTPQFLMTTNSLSTCCESSGRSLSDSAAAASAQTPVYCPVYESRLLATARHELNSAAALGVYGSPYTSTQGYGNYVTYGADASAFYSLNAFESKDGTGSAHAGIPQTAAYYPYEHTLSQYQYDRYGTMDGSTRRKNATRETTSTLKAWLQEHRKNPYPTKGEKIMLAIITKMTLTQVSTWFANARRRLKKENKMTWPPRNKCSDEKRPYDEEEEEEEEEDSQKATIKNEKKIVDEEVAREDKALDLSDLEDFDAIESESSECELKQPFHHQPQDGHQLRQRDCVNDHCKDVILKMPITPAANQELDRTKICHKPGVDQCEQEVLRGRQRGGESKACFQQQQILDSKPRIWSLAHTATSLNQTEYPSCMLKHQGLSSPSSSSSSSAVSTPVCVIDRRQDSPVTSLRNWVDGVFHDPLFRHSTLNQALTNTTVSWATTKGTLIDSGSLGRSVGNPTNAIKGQLPNIPHDTNKEFIAFQKSGSKMFCS.

A DNA-binding region (homeobox; TALE-type) is located at residues 141-203 (GSTRRKNATR…NARRRLKKEN (63 aa)). Residues 203 to 236 (NKMTWPPRNKCSDEKRPYDEEEEEEEEEDSQKAT) are disordered. A compositionally biased stretch (acidic residues) spans 221–231 (DEEEEEEEEED).

The protein belongs to the TALE/IRO homeobox family. In terms of tissue distribution, expressed in the neural plate in overlapping patterns with other irx members, which all share an anterior border of expression. Broadly expressed in the tailbud rhombencephalon (hindbrain). Outside the nervous system and at tailbud stages, expressed in the developing otic vesicle, branchial arches and prospective heart region.

It localises to the nucleus. Acts partially redundantly with other irx members in neural patterning. Required for formation of the posterior forebrain, midbrain, hindbrain, and to a lesser extent, spinal cord. Patterns the neuroectoderm in both the anterior/posterior and dorsal/ventral axes. Does not appear to play a role in pronephros kidney development. The protein is Iroquois-class homeodomain protein irx-4 of Xenopus tropicalis (Western clawed frog).